The sequence spans 278 residues: Digeranylgeranylglyceryl phosphate synthase (278 aa).

Helical transmembrane passes span 12–32 (LKNC…ASYF), 34–54 (LATV…CGFG), 91–111 (LLVF…LMAV), 129–149 (IIGN…GGIA), 153–173 (IDVT…REII), 204–224 (FLLV…FFGI), 225–245 (YYML…YNLV), and 257–277 (SRNI…GSLF).

Belongs to the UbiA prenyltransferase family. DGGGP synthase subfamily. Mg(2+) is required as a cofactor.

It is found in the cell membrane. The enzyme catalyses sn-3-O-(geranylgeranyl)glycerol 1-phosphate + (2E,6E,10E)-geranylgeranyl diphosphate = 2,3-bis-O-(geranylgeranyl)-sn-glycerol 1-phosphate + diphosphate. The protein operates within membrane lipid metabolism; glycerophospholipid metabolism. Prenyltransferase that catalyzes the transfer of the geranylgeranyl moiety of geranylgeranyl diphosphate (GGPP) to the C2 hydroxyl of (S)-3-O-geranylgeranylglyceryl phosphate (GGGP). This reaction is the second ether-bond-formation step in the biosynthesis of archaeal membrane lipids. This Methanococcus maripaludis (strain C7 / ATCC BAA-1331) protein is Digeranylgeranylglyceryl phosphate synthase.